The chain runs to 231 residues: 2-C-methyl-D-erythritol 4-phosphate cytidylyltransferase (231 aa).

The protein belongs to the IspD/TarI cytidylyltransferase family. IspD subfamily.

The catalysed reaction is 2-C-methyl-D-erythritol 4-phosphate + CTP + H(+) = 4-CDP-2-C-methyl-D-erythritol + diphosphate. It functions in the pathway isoprenoid biosynthesis; isopentenyl diphosphate biosynthesis via DXP pathway; isopentenyl diphosphate from 1-deoxy-D-xylulose 5-phosphate: step 2/6. Catalyzes the formation of 4-diphosphocytidyl-2-C-methyl-D-erythritol from CTP and 2-C-methyl-D-erythritol 4-phosphate (MEP). The polypeptide is 2-C-methyl-D-erythritol 4-phosphate cytidylyltransferase (Bacillus licheniformis (strain ATCC 14580 / DSM 13 / JCM 2505 / CCUG 7422 / NBRC 12200 / NCIMB 9375 / NCTC 10341 / NRRL NRS-1264 / Gibson 46)).